Reading from the N-terminus, the 223-residue chain is uncharacterized protein (223 aa).

A disordered region spans residues 1 to 30; the sequence is MASATVRNVPLLDDDTIPFGEEDEMRDPSR. The segment covering 12 to 25 has biased composition (acidic residues); sequence LDDDTIPFGEEDEM. A run of 4 helical transmembrane segments spans residues 35 to 55, 56 to 76, 129 to 149, and 154 to 174; these read YTHP…ILIY, MFCG…VLFL, IFWL…LFAL, and FKWL…LYGY.

Belongs to the TVP23 family.

Its subcellular location is the membrane. This is an uncharacterized protein from Drosophila melanogaster (Fruit fly).